Reading from the N-terminus, the 176-residue chain is NAD(P)H-quinone oxidoreductase subunit 6, chloroplastic (176 aa).

5 helical membrane-spanning segments follow: residues 10-30 (FLLV…VLLT), 32-52 (PIYS…FYIP), 61-81 (AQLL…VMFM), 93-115 (WTVG…ITTI), and 152-172 (FFLP…GAIA).

Belongs to the complex I subunit 6 family. As to quaternary structure, NDH is composed of at least 16 different subunits, 5 of which are encoded in the nucleus.

Its subcellular location is the plastid. The protein resides in the chloroplast thylakoid membrane. The catalysed reaction is a plastoquinone + NADH + (n+1) H(+)(in) = a plastoquinol + NAD(+) + n H(+)(out). It catalyses the reaction a plastoquinone + NADPH + (n+1) H(+)(in) = a plastoquinol + NADP(+) + n H(+)(out). In terms of biological role, NDH shuttles electrons from NAD(P)H:plastoquinone, via FMN and iron-sulfur (Fe-S) centers, to quinones in the photosynthetic chain and possibly in a chloroplast respiratory chain. The immediate electron acceptor for the enzyme in this species is believed to be plastoquinone. Couples the redox reaction to proton translocation, and thus conserves the redox energy in a proton gradient. The chain is NAD(P)H-quinone oxidoreductase subunit 6, chloroplastic (ndhG) from Vitis vinifera (Grape).